Here is a 243-residue protein sequence, read N- to C-terminus: Pyridoxine 5'-phosphate synthase (243 aa).

N9 is a binding site for 3-amino-2-oxopropyl phosphate. 11 to 12 (DH) lines the 1-deoxy-D-xylulose 5-phosphate pocket. R20 provides a ligand contact to 3-amino-2-oxopropyl phosphate. H45 functions as the Proton acceptor in the catalytic mechanism. 2 residues coordinate 1-deoxy-D-xylulose 5-phosphate: R47 and H52. The active-site Proton acceptor is E72. Residue T102 participates in 1-deoxy-D-xylulose 5-phosphate binding. The Proton donor role is filled by H193. Residues G194 and 215–216 (GH) each bind 3-amino-2-oxopropyl phosphate.

It belongs to the PNP synthase family. In terms of assembly, homooctamer; tetramer of dimers.

The protein resides in the cytoplasm. It catalyses the reaction 3-amino-2-oxopropyl phosphate + 1-deoxy-D-xylulose 5-phosphate = pyridoxine 5'-phosphate + phosphate + 2 H2O + H(+). Its pathway is cofactor biosynthesis; pyridoxine 5'-phosphate biosynthesis; pyridoxine 5'-phosphate from D-erythrose 4-phosphate: step 5/5. Its function is as follows. Catalyzes the complicated ring closure reaction between the two acyclic compounds 1-deoxy-D-xylulose-5-phosphate (DXP) and 3-amino-2-oxopropyl phosphate (1-amino-acetone-3-phosphate or AAP) to form pyridoxine 5'-phosphate (PNP) and inorganic phosphate. This chain is Pyridoxine 5'-phosphate synthase, found in Shigella sonnei (strain Ss046).